The primary structure comprises 292 residues: Peroxisomal 2,4-dienoyl-CoA reductase [(3E)-enoyl-CoA-producing] (292 aa).

Alanine 2 is modified (N-acetylalanine). NADP(+)-binding positions include 35–40 (GGGSGI), 60–64 (RSLPR), and aspartate 86. Arginine 60 contributes to the substrate binding site. Substrate-binding positions include arginine 88, phenylalanine 118, and 126-128 (SFN). Lysine 151 carries the N6-acetyllysine modification. NADP(+)-binding positions include lysine 182 and 208-214 (PGPISGT). Substrate is bound at residue arginine 219. A Phosphoserine modification is found at serine 287. The Microbody targeting signal signature appears at 290–292 (AKL). Lysine 291 is modified (N6-acetyllysine).

It belongs to the short-chain dehydrogenases/reductases (SDR) family. 2,4-dienoyl-CoA reductase subfamily. In terms of assembly, monomer, dimer and oligomer.

The protein localises to the peroxisome. It catalyses the reaction a (2E,4Z)-dienoyl-CoA + NADPH + H(+) = a 4,5-saturated-(3E)-enoyl-CoA + NADP(+). The enzyme catalyses a (2E,4E)-dienoyl-CoA + NADPH + H(+) = a 4,5-saturated-(3E)-enoyl-CoA + NADP(+). It carries out the reaction (2E,4E)-hexadienoyl-CoA + NADPH + H(+) = (3E)-hexenoyl-CoA + NADP(+). The catalysed reaction is (2E,4E)-decadienoyl-CoA + NADPH + H(+) = (3E)-decenoyl-CoA + NADP(+). It catalyses the reaction (2E,4Z,7Z,10Z,13Z,16Z,19Z)-docosaheptaenoyl-CoA + NADPH + H(+) = (3E,7Z,10Z,13Z,16Z,19Z)-docosahexaenoyl-CoA + NADP(+). Functionally, auxiliary enzyme of beta-oxidation. Participates in the degradation of unsaturated fatty enoyl-CoA esters having double bonds in both even- and odd-numbered positions in peroxisome. Catalyzes the NADP-dependent reduction of 2,4-dienoyl-CoA to yield trans-3-enoyl-CoA. Has activity towards short and medium chain 2,4-dienoyl-CoAs, but also towards 2,4,7,10,13,16,19-docosaheptaenoyl-CoA, suggesting that it does not constitute a rate limiting step in the peroxisomal degradation of docosahexaenoic acid. The chain is Peroxisomal 2,4-dienoyl-CoA reductase [(3E)-enoyl-CoA-producing] (DECR2) from Pongo abelii (Sumatran orangutan).